A 442-amino-acid polypeptide reads, in one-letter code: tRNA-2-methylthio-N(6)-dimethylallyladenosine synthase (442 aa).

The region spanning 5-122 (KKVFIKTLGC…LPEMIKRKQS (118 aa)) is the MTTase N-terminal domain. [4Fe-4S] cluster is bound by residues Cys14, Cys51, Cys85, Cys159, Cys163, and Cys166. Residues 145–378 (KAEGAKAYVS…DLLNSNAQII (234 aa)) form the Radical SAM core domain. The 63-residue stretch at 380 to 442 (RQMVGTEQRI…LPNSLRGELI (63 aa)) folds into the TRAM domain.

It belongs to the methylthiotransferase family. MiaB subfamily. As to quaternary structure, monomer. It depends on [4Fe-4S] cluster as a cofactor.

The protein localises to the cytoplasm. It catalyses the reaction N(6)-dimethylallyladenosine(37) in tRNA + (sulfur carrier)-SH + AH2 + 2 S-adenosyl-L-methionine = 2-methylsulfanyl-N(6)-dimethylallyladenosine(37) in tRNA + (sulfur carrier)-H + 5'-deoxyadenosine + L-methionine + A + S-adenosyl-L-homocysteine + 2 H(+). Catalyzes the methylthiolation of N6-(dimethylallyl)adenosine (i(6)A), leading to the formation of 2-methylthio-N6-(dimethylallyl)adenosine (ms(2)i(6)A) at position 37 in tRNAs that read codons beginning with uridine. The chain is tRNA-2-methylthio-N(6)-dimethylallyladenosine synthase from Francisella philomiragia subsp. philomiragia (strain ATCC 25017 / CCUG 19701 / FSC 153 / O#319-036).